The following is a 314-amino-acid chain: Small ribosomal subunit protein uS11m (314 aa).

Residues 1–37 (MNGVSRHLRASSLLSLIRSYGGINSVCRFSSQSDGFS) constitute a mitochondrion transit peptide. Residues 34–138 (DGFSGGRFRE…GSGFSAPSLS (105 aa)) form a disordered region. Over residues 50-63 (ESANNSGLSNTGRI) the composition is skewed to polar residues. Residues 103–114 (SSLRSRLPNSLP) show a composition bias toward low complexity.

It belongs to the universal ribosomal protein uS11 family. As to quaternary structure, component of the mitochondrial ribosome small subunit (28S) which comprises a 12S rRNA and about 30 distinct proteins.

The protein resides in the mitochondrion. In terms of biological role, required for karyogamy during female gametophyte development, when the two polar nuclei fuse to form the diploid central cell nucleus. This Arabidopsis thaliana (Mouse-ear cress) protein is Small ribosomal subunit protein uS11m.